We begin with the raw amino-acid sequence, 106 residues long: MILSNLSYIDNKELETINIVEGVCVFSKNVGKDIMASFKNVVGGEIKSYSEMVRDVKDTAVKKMVEEAKNLGADAVINIRYAMTSMSQGSTLAVIVSGTAVKVKGE.

Belongs to the UPF0145 family.

The protein is UPF0145 protein CTC_01500 of Clostridium tetani (strain Massachusetts / E88).